A 283-amino-acid chain; its full sequence is Probable endonuclease 4 (283 aa).

Positions 69, 109, 145, 179, 182, 216, 229, 231, and 261 each coordinate Zn(2+).

Belongs to the AP endonuclease 2 family. Requires Zn(2+) as cofactor.

It catalyses the reaction Endonucleolytic cleavage to 5'-phosphooligonucleotide end-products.. Its function is as follows. Endonuclease IV plays a role in DNA repair. It cleaves phosphodiester bonds at apurinic or apyrimidinic (AP) sites, generating a 3'-hydroxyl group and a 5'-terminal sugar phosphate. This chain is Probable endonuclease 4, found in Campylobacter curvus (strain 525.92).